Reading from the N-terminus, the 146-residue chain is Pre-mRNA-splicing factor cwf14 (146 aa).

It belongs to the BUD31 (G10) family. Belongs to the 40S cdc5-associated complex (or cwf complex), a spliceosome sub-complex reminiscent of a late-stage spliceosome composed of the U2, U5 and U6 snRNAs and at least brr2, cdc5, cwf2/prp3, cwf3/syf1, cwf4/syf3, cwf5/ecm2, spp42/cwf6, cwf7/spf27, cwf8, cwf9, cwf10, cwf11, cwf12, prp45/cwf13, cwf14, cwf15, cwf16, cwf17, cwf18, cwf19, cwf20, cwf21, cwf22, cwf23, cwf24, cwf25, cwf26, cyp7/cwf27, cwf28, cwf29/ist3, lea1, msl1, prp5/cwf1, prp10, prp12/sap130, prp17, prp22, sap61, sap62, sap114, sap145, slu7, smb1, smd1, smd3, smf1, smg1 and syf2.

The protein resides in the nucleus. Functionally, involved in mRNA splicing where it associates with cdc5 and the other cwf proteins as part of the spliceosome. The protein is Pre-mRNA-splicing factor cwf14 (cwf14) of Schizosaccharomyces pombe (strain 972 / ATCC 24843) (Fission yeast).